We begin with the raw amino-acid sequence, 366 residues long: MDFLNSSDQNLTSEELLNRMPSKILVSLTLSGLALMTTTINSLVIAAIIVTRKLHHPANYLICSLAVTDFLVAVLVMPFSIVYIVRESWIMGQVVCDIWLSVDITCCTCSILHLSAIALDRYRAITDAVEYARKRTPKHAGIMITIVWIISVFISMPPLFWRHQGTSRDDECIIKHDHIVSTIYSTFGAFYIPLALILILYYKIYRAAKTLYHKRQASRIAKEEVNGQVLLESGEKSTKSVSTSYVLEKSLSDPSTDFDKIHSTVRSLRSEFKHEKSWRRQKISGTRERKAATTLGLILGAFVICWLPFFVKELVVNVCDKCKISEEMSNFLAWLGYLNSLINPLIYTIFNEDFKKAFQKLVRCRC.

Over 1–24 (MDFLNSSDQNLTSEELLNRMPSKI) the chain is Extracellular. N-linked (GlcNAc...) asparagine glycans are attached at residues Asn5 and Asn10. Residues 25-49 (LVSLTLSGLALMTTTINSLVIAAII) form a helical membrane-spanning segment. Residues 50–59 (VTRKLHHPAN) lie on the Cytoplasmic side of the membrane. Residues 60-81 (YLICSLAVTDFLVAVLVMPFSI) form a helical membrane-spanning segment. Topologically, residues 82 to 96 (VYIVRESWIMGQVVC) are extracellular. Cys96 and Cys172 are oxidised to a cystine. Residues 97–119 (DIWLSVDITCCTCSILHLSAIAL) traverse the membrane as a helical segment. Serotonin contacts are provided by Asp103 and Cys107. The DRY motif; important for ligand-induced conformation changes motif lies at 120–122 (DRY). Topologically, residues 120–139 (DRYRAITDAVEYARKRTPKH) are cytoplasmic. The chain crosses the membrane as a helical span at residues 140 to 159 (AGIMITIVWIISVFISMPPL). The Extracellular segment spans residues 160–178 (FWRHQGTSRDDECIIKHDH). A helical membrane pass occupies residues 179 to 202 (IVSTIYSTFGAFYIPLALILILYY). The Cytoplasmic segment spans residues 203 to 291 (KIYRAAKTLY…KISGTRERKA (89 aa)). Residues 292–315 (ATTLGLILGAFVICWLPFFVKELV) traverse the membrane as a helical segment. The Extracellular segment spans residues 316–327 (VNVCDKCKISEE). Residues 328–350 (MSNFLAWLGYLNSLINPLIYTIF) form a helical membrane-spanning segment. Residues 343-347 (NPLIY) carry the NPxxY motif; important for ligand-induced conformation changes and signaling motif. The Cytoplasmic portion of the chain corresponds to 351–366 (NEDFKKAFQKLVRCRC).

The protein belongs to the G-protein coupled receptor 1 family.

The protein resides in the cell membrane. G-protein coupled receptor for 5-hydroxytryptamine (serotonin). Also functions as a receptor for various alkaloids and psychoactive substances. Receptor for lasmiditan, a drug for the treatment of acute migraine. Ligand binding causes a conformation change that triggers signaling via guanine nucleotide-binding proteins (G proteins) and modulates the activity of downstream effectors, such as adenylate cyclase. HTR1F is coupled to G(i)/G(o) G alpha proteins and mediates inhibitory neurotransmission by inhibiting adenylate cyclase activity. The chain is 5-hydroxytryptamine receptor 1F from Homo sapiens (Human).